Reading from the N-terminus, the 1201-residue chain is Zinc finger protein sdc-1 (1201 aa).

7 C2H2-type zinc fingers span residues 117–139 (LTCA…RGVH), 145–168 (YMCQ…RTSC), 233–254 (SSCH…GNVH), 268–290 (YFCH…WRLH), 486–513 (IVCH…LLRH), 521–543 (YHCA…INDC), and 652–674 (VVCF…DYCH). A disordered region spans residues 1164–1201 (KRRNSETREHELIELDTDDLNEPSTSDGRYSFGHHGYR). Over residues 1167–1176 (NSETREHELI) the composition is skewed to basic and acidic residues.

In terms of assembly, component of the SDC complex, which consists of sdc-1, sdc-2 and sdc-3. Within the complex, interacts with sdc-2 and sdc-3.

Its subcellular location is the nucleus. It localises to the chromosome. In terms of biological role, embryonic transcription factor regulating downstream genes involved specifically in the sex determination and dosage compensation pathways, or regulating other genes involved in the coordinate control of both processes. Component of the SDC complex that functions in sex determination and in X chromosome dosage compensation specifically in hermaphrodite (XX) animals. Involved in the recruitment of the condensin I-like dosage compensation complex to the male sex-determining autosomal gene her-1, thereby contributing to its repression and initiating hermaphrodite sexual development. Similarly, might contribute to X-linked gene repression through recruitment of the dosage compensation complex to the X chromosomes in hermaphrodites. Seems to be involved in the depletion of histone H4 lysine 16 acetylation (H4K16ac) on dosage compensated X chromosomes. Plays a role in developmental rate and body fat regulation downstream of the TOR complex 2 pathway. The polypeptide is Zinc finger protein sdc-1 (sdc-1) (Caenorhabditis elegans).